Here is a 28-residue protein sequence, read N- to C-terminus: Sarcolamban A (28 aa).

The helical transmembrane segment at 7–27 threads the bilayer; sequence LFTTFGILAILLFFLYLIYAV.

In terms of assembly, interacts with SERCA. Strongly expressed in embryonic and larval somatic muscles and postembryonic heart.

It is found in the sarcoplasmic reticulum membrane. The protein resides in the cell membrane. The protein localises to the sarcolemma. Its subcellular location is the T-tubule. Functionally, plays an essential role in the regulation of calcium transport at the sarcoplasmic reticulum (SR), which is secondarily required for regular muscle contraction. The protein is Sarcolamban A of Drosophila melanogaster (Fruit fly).